The sequence spans 584 residues: MSALLSADDLNDFISPGVACIKPPASTNTNTNTTTTDSYNENGEVEIQIDSQGNPLEISKIDGKQIQTNQLTPAQISLADCLACSGCITSAEEVLVAQHSHQELIKALQSPTKNKVFVVSISHQSRASLAMAYNVTIEIMDKLLINLFIKQMGFTYIIGTSLGRKLSLINEAKEVINRKTEEGPILSSICPGWVLYAEKTHPYIIPKLSTIKSPQQITGCLLKNLTCEALQIDKSEIYHLSIMPCFDKKLESARPEIYDNENEEDKSISISVPDVDCVITAKELITLLEECPQYQLIPPQPTQPTLGGDLDLSVTEIYKQYAPPNWPFIEYSWSNDSGSSSGGYAYNYLNIYRNDLVLRKGYDPNKFTINLINGRNSDIYEMRLIYDSKETLASAAVVNGFRNIQNLVRKLKPNTNKSMNNKINPLVARRRARMINRGKSESISQEIEIEIADASKVDYVEIMACPNGCINGGGQINPPTTTTISNTTGLPQKEIEKQWINKVLDKYNTIPILFDLSLPSTSSSLEIMKYIEWSENFEKHFNISNDRLFKISFNPRENKSTGTATTTDDNNDPAATALLVGSKW.

[4Fe-4S] cluster is bound by residues Cys20, Cys81, Cys84, Cys87, Cys190, Cys245, Cys465, and Cys469.

Belongs to the NARF family.

Functionally, component of the cytosolic Fe/S protein assembly machinery. Required for maturation of extramitochondrial Fe/S proteins. May play a role in the transfer of pre-assembled Fe/S clusters to target apoproteins. This chain is Cytosolic Fe-S cluster assembly factor NAR1 (NAR1), found in Candida dubliniensis (strain CD36 / ATCC MYA-646 / CBS 7987 / NCPF 3949 / NRRL Y-17841) (Yeast).